A 76-amino-acid polypeptide reads, in one-letter code: Protein RALF-like 26 (76 aa).

Residues 1–22 (MKAWMIILLVICVAVVVEQSEA) form the signal peptide. Residues Cys-37 and Cys-46 are joined by a disulfide bond. The N-linked (GlcNAc...) asparagine glycan is linked to Asn-61. A disulfide bond links Cys-66 and Cys-72.

It belongs to the plant rapid alkalinization factor (RALF) family.

The protein resides in the secreted. Functionally, cell signaling peptide that may regulate plant stress, growth, and development. Mediates a rapid alkalinization of extracellular space by mediating a transient increase in the cytoplasmic Ca(2+) concentration leading to a calcium-dependent signaling events through a cell surface receptor and a concomitant activation of some intracellular mitogen-activated protein kinases. In Arabidopsis thaliana (Mouse-ear cress), this protein is Protein RALF-like 26 (RALFL26).